A 198-amino-acid polypeptide reads, in one-letter code: Glycerol-3-phosphate acyltransferase (198 aa).

4 helical membrane-spanning segments follow: residues 3-23 (VEWL…AVIV), 81-101 (LFAA…FFQF), 113-133 (VLLG…IGVA), and 153-175 (YVWL…MLLV).

This sequence belongs to the PlsY family. As to quaternary structure, probably interacts with PlsX.

The protein localises to the cell inner membrane. It carries out the reaction an acyl phosphate + sn-glycerol 3-phosphate = a 1-acyl-sn-glycero-3-phosphate + phosphate. It participates in lipid metabolism; phospholipid metabolism. Catalyzes the transfer of an acyl group from acyl-phosphate (acyl-PO(4)) to glycerol-3-phosphate (G3P) to form lysophosphatidic acid (LPA). This enzyme utilizes acyl-phosphate as fatty acyl donor, but not acyl-CoA or acyl-ACP. The chain is Glycerol-3-phosphate acyltransferase from Methylococcus capsulatus (strain ATCC 33009 / NCIMB 11132 / Bath).